The following is a 479-amino-acid chain: Ribosomal RNA small subunit methyltransferase F (479 aa).

S-adenosyl-L-methionine contacts are provided by residues 125-131 (AAAPGSK), E149, D176, and D194. The active-site Nucleophile is C247.

This sequence belongs to the class I-like SAM-binding methyltransferase superfamily. RsmB/NOP family.

Its subcellular location is the cytoplasm. The catalysed reaction is cytidine(1407) in 16S rRNA + S-adenosyl-L-methionine = 5-methylcytidine(1407) in 16S rRNA + S-adenosyl-L-homocysteine + H(+). Its function is as follows. Specifically methylates the cytosine at position 1407 (m5C1407) of 16S rRNA. This is Ribosomal RNA small subunit methyltransferase F from Salmonella paratyphi C (strain RKS4594).